The sequence spans 329 residues: Methionyl-tRNA formyltransferase (329 aa).

A (6S)-5,6,7,8-tetrahydrofolate-binding site is contributed by 112–115 (SILP).

The protein belongs to the Fmt family.

The catalysed reaction is L-methionyl-tRNA(fMet) + (6R)-10-formyltetrahydrofolate = N-formyl-L-methionyl-tRNA(fMet) + (6S)-5,6,7,8-tetrahydrofolate + H(+). In terms of biological role, attaches a formyl group to the free amino group of methionyl-tRNA(fMet). The formyl group appears to play a dual role in the initiator identity of N-formylmethionyl-tRNA by promoting its recognition by IF2 and preventing the misappropriation of this tRNA by the elongation apparatus. This Shewanella sediminis (strain HAW-EB3) protein is Methionyl-tRNA formyltransferase.